We begin with the raw amino-acid sequence, 420 residues long: Pectate lyase (420 aa).

Residues methionine 1–alanine 21 form the signal peptide. Residues threonine 117 to lysine 139 form a disordered region. The span at glycine 119–alanine 132 shows a compositional bias: basic and acidic residues. Ca(2+) is bound by residues aspartate 205, aspartate 244, and aspartate 248. Arginine 300 is an active-site residue.

Belongs to the polysaccharide lyase 1 family. Monomer. Ca(2+) serves as cofactor.

It is found in the secreted. It catalyses the reaction Eliminative cleavage of (1-&gt;4)-alpha-D-galacturonan to give oligosaccharides with 4-deoxy-alpha-D-galact-4-enuronosyl groups at their non-reducing ends.. Its pathway is glycan metabolism; pectin degradation; 2-dehydro-3-deoxy-D-gluconate from pectin: step 2/5. Produces unsaturated products from polygalacturonate. The sequence is that of Pectate lyase (pel) from Bacillus subtilis (strain 168).